Here is a 986-residue protein sequence, read N- to C-terminus: Leucine-rich repeat receptor-like kinase protein HAR1 (986 aa).

The signal sequence occupies residues 1–25 (MRIRVSYLLVLCFTLIWFRWTVVYS). 21 LRR repeats span residues 71–97 (DQNLRVVALNVTLVPLFGHLPPEIGLL), 98–121 (EKLENLTISMNNLTDQLPSDLASL), 123–145 (SLKVLNISHNLFSGQFPGNITVG), 146–170 (MTELEALDAYDNSFSGPLPEEIVKL), 171–196 (EKLKYLHLAGNYFSGTIPESYSEFQS), 198–218 (EFLGLNANSLTGRVPESLAKL), 243–267 (MENLRLLEMANCNLTGEIPPSLGNL), 268–291 (TKLHSLFVQMNNLTGTIPPELSSM), 293–314 (SLMSLDLSINDLTGEIPESFSK), 316–339 (KNLTLMNFFQNKFRGSLPSFIGDL), 340–363 (PNLETLQVWENNFSFVLPHNLGGN), 365–387 (RFLYFDVTKNHLTGLIPPDLCKS), 388–411 (GRLKTFIITDNFFRGPIPKGIGEC), 412–435 (RSLTKIRVANNFLDGPVPPGVFQL), 437–458 (SVTITELSNNRLNGELPSVISG), 459–482 (ESLGTLTLSNNLFTGKIPAAMKNL), 483–506 (RALQSLSLDANEFIGEIPGGVFEI), 508–530 (MLTKVNISGNNLTGPIPTTITHR), 531–554 (ASLTAVDLSRNNLAGEVPKGMKNL), 555–578 (MDLSILNLSRNEISGPVPDEIRFM), and 579–603 (TSLTTLDLSSNNFTGTVPTGGQFLV). N-linked (GlcNAc...) asparagine glycans are attached at residues Asn80, Asn102, Asn109, Asn128, and Asn141. Asn255, Asn266, and Asn279 each carry an N-linked (GlcNAc...) asparagine glycan. N-linked (GlcNAc...) asparagine glycosylation is found at Asn317 and Asn351. Asn513 and Asn518 each carry an N-linked (GlcNAc...) asparagine glycan. N-linked (GlcNAc...) asparagine glycosylation is found at Asn561 and Asn590. Residues 645 to 665 (IVIGIALATAVLLVAVTVHVV) form a helical membrane-spanning segment. The Protein kinase domain maps to 695–971 (LKEENIIGKG…TMREVVHMLT (277 aa)). Residues 701 to 709 (IGKGGAGIV) and Lys723 contribute to the ATP site. Asp820 acts as the Proton acceptor in catalysis.

The protein belongs to the protein kinase superfamily. Ser/Thr protein kinase family. Expressed in roots, leaves, stems and flowers.

It is found in the cell membrane. The enzyme catalyses L-seryl-[protein] + ATP = O-phospho-L-seryl-[protein] + ADP + H(+). The catalysed reaction is L-threonyl-[protein] + ATP = O-phospho-L-threonyl-[protein] + ADP + H(+). In terms of biological role, LRR receptor kinase involved in the regulation of root and shoot growth, and root nodule organogenesis. Involved in long distance nodulation signaling events. Involved in the autoregulation of nodulation (AON), a long distance systemic signaling from root to shoot and back again, which allows legumes to limit the number of root nodules formed based on available nitrogen and previous rhizobial colonization. Acts from shoot to root to control AON. Involved in the regulation of root colonization by arbuscular mycorrhizal (AM) fungi. This is Leucine-rich repeat receptor-like kinase protein HAR1 from Lotus japonicus (Lotus corniculatus var. japonicus).